Here is a 249-residue protein sequence, read N- to C-terminus: uncharacterized protein (249 aa).

The protein belongs to the HAD-like hydrolase superfamily. CbbY/CbbZ/Gph/YieH family.

This is an uncharacterized protein from Schizosaccharomyces pombe (strain 972 / ATCC 24843) (Fission yeast).